Here is a 341-residue protein sequence, read N- to C-terminus: GTP-binding protein REM 2 (341 aa).

Positions 1–13 (MHTDLDTDMDMDT) are enriched in acidic residues. Disordered regions lie at residues 1 to 71 (MHTD…GSMP) and 84 to 106 (VDELDWPPQASPSGSSDSLGSGE). Over residues 18 to 30 (LCSSSSRQASPLG) the composition is skewed to polar residues. Ser-27 bears the Phosphoserine mark. The span at 90–106 (PPQASPSGSSDSLGSGE) shows a compositional bias: low complexity. GTP is bound by residues 122 to 129 (GESGVGKS), 230 to 233 (NKSD), and 261 to 262 (AA). A disordered region spans residues 282–309 (RGRGHAGGQRPEPSSPDGPAPPTRRESL). A compositionally biased stretch (pro residues) spans 294–303 (PSSPDGPAPP). Ser-296 is subject to Phosphoserine.

The protein belongs to the small GTPase superfamily. RGK family.

The protein resides in the cell membrane. Binds GTP saturably and exhibits a low intrinsic rate of GTP hydrolysis. In Mus musculus (Mouse), this protein is GTP-binding protein REM 2 (Rem2).